A 151-amino-acid polypeptide reads, in one-letter code: Small ribosomal subunit protein uS15 (151 aa).

Belongs to the universal ribosomal protein uS15 family.

In Agaricus bisporus (White button mushroom), this protein is Small ribosomal subunit protein uS15 (RPS13).